The sequence spans 151 residues: Small ribosomal subunit protein uS19 (151 aa).

This sequence belongs to the universal ribosomal protein uS19 family.

Protein S19 forms a complex with S13 that binds strongly to the 16S ribosomal RNA. The chain is Small ribosomal subunit protein uS19 (rps19) from Thermoplasma acidophilum (strain ATCC 25905 / DSM 1728 / JCM 9062 / NBRC 15155 / AMRC-C165).